The following is a 398-amino-acid chain: Acetate kinase (398 aa).

Residue asparagine 8 coordinates Mg(2+). Lysine 15 lines the ATP pocket. Arginine 89 provides a ligand contact to substrate. Aspartate 146 acts as the Proton donor/acceptor in catalysis. Residues 206–210 (HIGNG), 283–285 (DMR), and 331–335 (GMGEN) contribute to the ATP site. A Mg(2+)-binding site is contributed by glutamate 383.

Belongs to the acetokinase family. Homodimer. It depends on Mg(2+) as a cofactor. Requires Mn(2+) as cofactor.

It localises to the cytoplasm. The catalysed reaction is acetate + ATP = acetyl phosphate + ADP. The protein operates within metabolic intermediate biosynthesis; acetyl-CoA biosynthesis; acetyl-CoA from acetate: step 1/2. Its function is as follows. Catalyzes the formation of acetyl phosphate from acetate and ATP. Can also catalyze the reverse reaction. The sequence is that of Acetate kinase from Streptococcus pyogenes serotype M6 (strain ATCC BAA-946 / MGAS10394).